Here is a 280-residue protein sequence, read N- to C-terminus: Mitochondrial outer membrane protein porin 2 (280 aa).

It belongs to the eukaryotic mitochondrial porin (TC 1.B.8.1) family. Expressed in roots, stems, leaves, palea, lemma and pollen.

It is found in the mitochondrion outer membrane. Forms a channel through the mitochondrial outer membrane that allows diffusion of small hydrophilic molecules. The channel adopts an open conformation at low or zero membrane potential and a closed conformation at potentials above 30-40 mV. The open state has a weak anion selectivity whereas the closed state is cation-selective. This is Mitochondrial outer membrane protein porin 2 (VDAC2) from Oryza sativa subsp. japonica (Rice).